The primary structure comprises 314 residues: Olfactory receptor 52K1 (314 aa).

Over 1 to 27 (MLPSNITSTHPAVFLLVGIPGLEHLHA) the chain is Extracellular. Residue Asn-5 is glycosylated (N-linked (GlcNAc...) asparagine). Residues 28–48 (WISIPFCFAYTLALLGNCTLL) form a helical membrane-spanning segment. Over 49 to 56 (FIIQADAA) the chain is Cytoplasmic. Residues 57 to 77 (LHEPMYLFLAMLATIDLVLSS) traverse the membrane as a helical segment. The Extracellular portion of the chain corresponds to 78–101 (TTLPKMLAIFWFRDQEINFFACLV). Residues Cys-99 and Cys-191 are joined by a disulfide bond. The helical transmembrane segment at 102 to 122 (QMFFLHSFSIMESAVLLAMAF) threads the bilayer. Over 123–141 (DRYVAICKPLHYTTVLTGS) the chain is Cytoplasmic. A helical transmembrane segment spans residues 142-162 (LITKIGMAAVARAVTLMTPLP). Over 163 to 198 (FLLRRFHYCRGPVIAHCYCEHMAVVRLACGDTSFNN) the chain is Extracellular. A helical transmembrane segment spans residues 199 to 219 (IYGIAVAMFIVVLDLLFVILS). Over 220 to 239 (YVFILQAVLQLASQEARYKA) the chain is Cytoplasmic. A helical membrane pass occupies residues 240–260 (FGTCVSHIGAILSTYTPVVIS). The Extracellular segment spans residues 261–275 (SVMHRVARHAAPRVH). Residues 276-296 (ILLAIFYLLFPPMVNPIIYGV) form a helical membrane-spanning segment. The Cytoplasmic portion of the chain corresponds to 297 to 314 (KTKQIREYVLSLFQRKNM).

The protein belongs to the G-protein coupled receptor 1 family.

The protein localises to the cell membrane. Functionally, odorant receptor. The protein is Olfactory receptor 52K1 (OR52K1) of Homo sapiens (Human).